A 265-amino-acid chain; its full sequence is Undecaprenyl-diphosphatase (265 aa).

7 helical membrane-spanning segments follow: residues 41 to 61 (IAYTFGLFMEMGSIGSALIYF), 75 to 95 (LKFLVVVTALTGIVGVPLYVI), 104 to 124 (YNPSIPMIFLGIALIADGIYI), 137 to 157 (LSTKEMILIGIAQGIAALPGV), 180 to 200 (YSYLAYIPAAIGSVGTTLLFT), 215 to 235 (GIALAVISALLTGLVVIGFLL), and 244 to 264 (YLIDFMLGGIAVLVSMLGLII).

It belongs to the UppP family.

It localises to the cell membrane. It carries out the reaction di-trans,octa-cis-undecaprenyl diphosphate + H2O = di-trans,octa-cis-undecaprenyl phosphate + phosphate + H(+). Functionally, catalyzes the dephosphorylation of undecaprenyl diphosphate (UPP). The protein is Undecaprenyl-diphosphatase of Saccharolobus islandicus (strain Y.N.15.51 / Yellowstone #2) (Sulfolobus islandicus).